The sequence spans 243 residues: DNA repair protein RecO (243 aa).

Belongs to the RecO family.

Functionally, involved in DNA repair and RecF pathway recombination. The protein is DNA repair protein RecO of Geobacter sulfurreducens (strain ATCC 51573 / DSM 12127 / PCA).